The following is a 593-amino-acid chain: AT-rich interactive domain-containing protein 3A (593 aa).

The disordered stretch occupies residues 14-222 (QQRARQELEA…PQLQPPDHGD (209 aa)). Basic and acidic residues predominate over residues 41-53 (AAPDEDREPESAR). Positions 54-87 (MQRAQMAALAAMRAAAAGLGHPASPGGSEDGPPG) are enriched in low complexity. Ser77, Ser81, and Ser88 each carry phosphoserine. Thr98 carries the post-translational modification Phosphothreonine. A phosphoserine mark is found at Ser101 and Ser119. Residues 104–127 (RGREGPGEEHFEDMASDEDMKPKW) are compositionally biased toward basic and acidic residues. An acidic region spans residues 119–156 (SDEDMKPKWEEEEMEEDLGEDEEEEEEDYEDEEEEEDE). Residues 128–158 (EEEEMEEDLGEDEEEEEEDYEDEEEEEDEEG) are compositionally biased toward acidic residues. Residues 238-330 (DPKRKEFLDD…YLYPYECEKR (93 aa)) enclose the ARID domain. Ser353 and Ser362 each carry phosphoserine. Residues Lys398, Lys399, Lys452, and Lys462 each participate in a glycyl lysine isopeptide (Lys-Gly) (interchain with G-Cter in SUMO2) cross-link. The REKLES domain occupies 444–541 (AALEQLREKL…GVLFAQPPAP (98 aa)). Residues 445–488 (ALEQLREKLESAEPPEKKMALVADEQQRLMQRALQQNFLAMAAQ) form an important for nuclear localization region. The segment at 490–513 (PMSIRINSQASESRQDSAVNLTGT) is homodimerization. Disordered stretches follow at residues 497–516 (SQAS…TNGS) and 539–593 (PAPT…NSLP). The segment at 537 to 557 (QPPAPTPTSAPNKGGGGGGGS) is important for cytoplasmic localization. Over residues 549 to 576 (KGGGGGGGSSSNAGGRGGNTGTSGGQAG) the composition is skewed to gly residues. Over residues 580–593 (LSTPSTSTSNNSLP) the composition is skewed to low complexity.

Homodimer. Heterodimer with ARID3B. Interacts with E2F1. Interacts with GTF2I and BTK. In terms of tissue distribution, widely expressed, with highest expression in skeletal muscle, thalamus, and colon.

It localises to the nucleus. Its subcellular location is the cytoplasm. Its function is as follows. Transcription factor which may be involved in the control of cell cycle progression by the RB1/E2F1 pathway and in B-cell differentiation. In Homo sapiens (Human), this protein is AT-rich interactive domain-containing protein 3A (ARID3A).